The following is a 338-amino-acid chain: Lipoyl synthase (338 aa).

A disordered region spans residues 1-24; sequence MTTVQEAVPNLIPTQDATPRPAPK. The [4Fe-4S] cluster site is built by Cys-84, Cys-89, Cys-95, Cys-110, Cys-114, Cys-117, and Ser-324. The Radical SAM core domain maps to 96–313; it reads FSGGTATFMI…AEEGYKMGFK (218 aa).

This sequence belongs to the radical SAM superfamily. Lipoyl synthase family. [4Fe-4S] cluster serves as cofactor.

The protein localises to the cytoplasm. The catalysed reaction is [[Fe-S] cluster scaffold protein carrying a second [4Fe-4S](2+) cluster] + N(6)-octanoyl-L-lysyl-[protein] + 2 oxidized [2Fe-2S]-[ferredoxin] + 2 S-adenosyl-L-methionine + 4 H(+) = [[Fe-S] cluster scaffold protein] + N(6)-[(R)-dihydrolipoyl]-L-lysyl-[protein] + 4 Fe(3+) + 2 hydrogen sulfide + 2 5'-deoxyadenosine + 2 L-methionine + 2 reduced [2Fe-2S]-[ferredoxin]. Its pathway is protein modification; protein lipoylation via endogenous pathway; protein N(6)-(lipoyl)lysine from octanoyl-[acyl-carrier-protein]: step 2/2. Its function is as follows. Catalyzes the radical-mediated insertion of two sulfur atoms into the C-6 and C-8 positions of the octanoyl moiety bound to the lipoyl domains of lipoate-dependent enzymes, thereby converting the octanoylated domains into lipoylated derivatives. The protein is Lipoyl synthase of Pseudomonas putida (strain W619).